We begin with the raw amino-acid sequence, 239 residues long: Purine nucleoside phosphorylase DeoD-type (239 aa).

H5 contacts a purine D-ribonucleoside. G21 and R25 together coordinate phosphate. K27 carries the post-translational modification N6-acetyllysine. Phosphate contacts are provided by residues R44 and 88 to 91 (RVGS). A purine D-ribonucleoside contacts are provided by residues 180–182 (EME) and 204–205 (SD). D205 (proton donor) is an active-site residue.

It belongs to the PNP/UDP phosphorylase family. As to quaternary structure, homohexamer; trimer of homodimers.

The enzyme catalyses a purine D-ribonucleoside + phosphate = a purine nucleobase + alpha-D-ribose 1-phosphate. It carries out the reaction a purine 2'-deoxy-D-ribonucleoside + phosphate = a purine nucleobase + 2-deoxy-alpha-D-ribose 1-phosphate. Functionally, catalyzes the reversible phosphorolytic breakdown of the N-glycosidic bond in the beta-(deoxy)ribonucleoside molecules, with the formation of the corresponding free purine bases and pentose-1-phosphate. This Escherichia coli O81 (strain ED1a) protein is Purine nucleoside phosphorylase DeoD-type.